We begin with the raw amino-acid sequence, 72 residues long: Aurein-2.3 (72 aa).

The signal sequence occupies residues 1-22; that stretch reads MAFLKKSLFLVLFLGLVSLSIC. Residues 23 to 49 constitute a propeptide that is removed on maturation; it reads EKEKRQNGEDEDENEAANHEEGSEEKR. The segment at 27–47 is disordered; sequence RQNGEDEDENEAANHEEGSEE. A compositionally biased stretch (basic and acidic residues) spans 38 to 47; sequence AANHEEGSEE. Leucine amide is present on leucine 65. Positions 69–72 are excised as a propeptide; that stretch reads NDVE.

In terms of processing, amidation is essential for antibacterial activity against Gram-positive bacteria. As to expression, expressed by the skin dorsal glands.

It localises to the secreted. Its subcellular location is the target cell membrane. Amphipathic alpha-helical antimicrobial peptide with weak to moderate activity against Gram-positive bacteria, and no activity against Gram-negative bacteria. Probably acts by disturbing membrane functions with its amphipathic structure. Strongly inhibits the formation of NO by neuronal nitric oxide synthase (nNOS) at micromolar concentrations. Acts by a non-competitive mechanism, probably by binding to calcium/calmodulin and as a consequence blocking calmodulin attachment to nNOS. The polypeptide is Aurein-2.3 (Ranoidea aurea (Green and golden bell frog)).